The sequence spans 138 residues: MASLSATTTVRVQPSSSSLHKLSQGNGRCSSIVCLDWGKSSFPTLRTSRRRSFISAAKKETIDKVCDIVKEKLALGADVVVTADSEFSKLGADSLDTVEIVMNLEEEFGINVDEDKAQDISTIQQAADVIESLLEKKA.

The N-terminal 56 residues, 1 to 56 (MASLSATTTVRVQPSSSSLHKLSQGNGRCSSIVCLDWGKSSFPTLRTSRRRSFISA), are a transit peptide targeting the chloroplast. In terms of domain architecture, Carrier spans 59-134 (KETIDKVCDI…QAADVIESLL (76 aa)). Position 94 is an O-(pantetheine 4'-phosphoryl)serine (serine 94).

The protein belongs to the acyl carrier protein (ACP) family. In terms of processing, 4'-phosphopantetheine is transferred from CoA to a specific serine of apo-ACP by acpS. This modification is essential for activity because fatty acids are bound in thioester linkage to the sulfhydryl of the prosthetic group.

The protein localises to the plastid. It is found in the chloroplast. It functions in the pathway lipid metabolism; fatty acid biosynthesis. Carrier of the growing fatty acid chain in fatty acid biosynthesis. This chain is Acyl carrier protein 1, chloroplastic (ACL1.1), found in Spinacia oleracea (Spinach).